The sequence spans 242 residues: Venom nerve growth factor 3 (242 aa).

Residues 1-18 (MSMLCYTLIIAFLIGIWA) form the signal peptide. The propeptide occupies 19-125 (APQSEDNVPL…ALNRNIQAKR (107 aa)). The interval 45–69 (HEGLKTSRNTDQRHPAPKKVDDQEP) is disordered. Residues 46–66 (EGLKTSRNTDQRHPAPKKVDD) show a composition bias toward basic and acidic residues. Cystine bridges form between cysteine 139-cysteine 203, cysteine 181-cysteine 231, and cysteine 191-cysteine 233.

It belongs to the NGF-beta family. Homodimer; non-covalently linked. As to expression, expressed by the venom gland.

The protein resides in the secreted. In terms of biological role, nerve growth factor is important for the development and maintenance of the sympathetic and sensory nervous systems. It stimulates division and differentiation of sympathetic and embryonic sensory neurons as well as basal forebrain cholinergic neurons in the brain. Its relevance in the snake venom is not clear. However, it has been shown to inhibit metalloproteinase-dependent proteolysis of platelet glycoprotein Ib alpha, suggesting a metalloproteinase inhibition to prevent metalloprotease autodigestion and/or protection against prey proteases. Binds a lipid between the two protein chains in the homodimer. The lipid-bound form promotes histamine relase from mouse mast cells, contrary to the lipid-free form. In Pseudechis australis (Mulga snake), this protein is Venom nerve growth factor 3.